A 695-amino-acid polypeptide reads, in one-letter code: Electrogenic aspartate/glutamate antiporter Aralar, mitochondrial (695 aa).

Residues Met1–Pro310 are N-terminal domain. At Pro2–Arg345 the chain is on the mitochondrial intermembrane side. 4 EF-hand domains span residues Phe71–Cys104, Thr105–His140, Lys142–Asp175, and Phe176–His211. The Ca(2+) site is built by Asp84, Ser86, Asp88, Leu90, Glu95, Asp118, Asn122, Thr124, and Asp129. The Ca(2+) site is built by Asp189, Thr193, and Asp200. Residues Glu311 to Val327 form a linker loop domain region. The interval Phe336–Thr627 is carrier domain. 3 Solcar repeats span residues Leu340 to Lys431, Ile439 to Met523, and Asn531 to Leu619. Residues Phe346–Ile363 form a helical membrane-spanning segment. Topologically, residues Asp364–Arg405 are mitochondrial matrix. A helical transmembrane segment spans residues Gly406–Asn425. Residues Asp426–Gly448 lie on the Mitochondrial intermembrane side of the membrane. A helical transmembrane segment spans residues Gly449–Leu462. At Glu463–Lys497 the chain is on the mitochondrial matrix side. Residues Gly498 to Tyr517 traverse the membrane as a helical segment. The Mitochondrial intermembrane segment spans residues Ala518–Leu536. Residues Leu537–Ala554 traverse the membrane as a helical segment. Topologically, residues Asp555 to Lys593 are mitochondrial matrix. The helical transmembrane segment at Gly594–Tyr613 threads the bilayer. Residues Glu614–Ser695 lie on the Mitochondrial intermembrane side of the membrane. The C-terminal domain stretch occupies residues Gln628–Ser695.

The protein belongs to the mitochondrial carrier (TC 2.A.29) family. As to quaternary structure, homodimer (via N-terminus). Requires Ca(2+) as cofactor. In terms of tissue distribution, expressed throughout the body in both males and females, including in ovaries and testes. As to expression, specifically expressed in female ovaries. Expressed throughout the body in both males and females but absent from ovaries and testes.

The protein localises to the mitochondrion inner membrane. The catalysed reaction is L-aspartate(in) + L-glutamate(out) + H(+)(out) = L-aspartate(out) + L-glutamate(in) + H(+)(in). It catalyses the reaction 3-sulfino-L-alanine(out) + L-glutamate(in) + H(+)(in) = 3-sulfino-L-alanine(in) + L-glutamate(out) + H(+)(out). The enzyme catalyses L-2-aminoadipate(in) + L-glutamate(out) + H(+)(out) = L-2-aminoadipate(out) + L-glutamate(in) + H(+)(in). It carries out the reaction L-glutamine(in) + L-glutamate(out) + Na(+)(out) + H(+)(out) = L-glutamine(out) + L-glutamate(in) + Na(+)(in) + H(+)(in). Activated by Ca(2+). Inhibited by p-chloromercuribenzoate, pyrocarbonate, mersalyl, tannic acid and N-ethylmaleimide. In terms of biological role, mitochondrial electrogenic aspartate/glutamate antiporter that favors efflux of aspartate and entry of glutamate and proton within the mitochondria as part of the malate-aspartate shuttle. Also mediates the exchange of L-cysteinesulfinate (3-sulfino-L-alanine) for L-glutamate. Necessary for gamma-aminobutyric acid (GABA) uptake in brain mitochondria in response to increased mitochondrial membrane polarization; does not possess detectable GABA transport activity but role may be indirect. Possesses transport activity towards L-aspartate, L-glutamate and L-cysteinesulfinate (3-sulfino-L-alanine). L-glutamine transport activity is undetectable. GABA transport activity is undetectable. Functionally, possesses transport activity towards L-aspartate, L-glutamate and L-cysteinesulfinate (3-sulfino-L-alanine). Has a wider substrate specificity range that includes L-2-aminoadipate and L-glutamine. GABA transport activity is undetectable. This Drosophila melanogaster (Fruit fly) protein is Electrogenic aspartate/glutamate antiporter Aralar, mitochondrial.